A 1075-amino-acid chain; its full sequence is DNA-directed RNA polymerase subunit beta (1075 aa).

The protein belongs to the RNA polymerase beta chain family. As to quaternary structure, in plastids the minimal PEP RNA polymerase catalytic core is composed of four subunits: alpha, beta, beta', and beta''. When a (nuclear-encoded) sigma factor is associated with the core the holoenzyme is formed, which can initiate transcription.

Its subcellular location is the plastid. It is found in the chloroplast. The catalysed reaction is RNA(n) + a ribonucleoside 5'-triphosphate = RNA(n+1) + diphosphate. In terms of biological role, DNA-dependent RNA polymerase catalyzes the transcription of DNA into RNA using the four ribonucleoside triphosphates as substrates. The chain is DNA-directed RNA polymerase subunit beta from Saccharum officinarum (Sugarcane).